A 112-amino-acid polypeptide reads, in one-letter code: uncharacterized protein (112 aa).

Residues 75-95 form a helical membrane-spanning segment; sequence ILGVFGGFIYILTPLPIVSGF.

It is found in the membrane. This is an uncharacterized protein from Methanocaldococcus jannaschii (strain ATCC 43067 / DSM 2661 / JAL-1 / JCM 10045 / NBRC 100440) (Methanococcus jannaschii).